Here is a 161-residue protein sequence, read N- to C-terminus: Dihydrofolate reductase (161 aa).

The region spanning 1-160 is the DHFR domain; that stretch reads MTMVGLIWAQ…LRYRLYSYHR (160 aa). Residue 7–9 participates in substrate binding; the sequence is IWA. NADP(+)-binding positions include 8–9 and 16–21; these read WA and IGRGGD. Substrate contacts are provided by Asp29 and Arg34. An NADP(+)-binding site is contributed by 45 to 48; the sequence is GRRT. Residue Arg62 participates in substrate binding. NADP(+) is bound by residues 67–70, Gly82, and 96–101; these read LSRQ and IGGGQV. The substrate site is built by Tyr102 and Thr115.

Belongs to the dihydrofolate reductase family.

It catalyses the reaction (6S)-5,6,7,8-tetrahydrofolate + NADP(+) = 7,8-dihydrofolate + NADPH + H(+). The protein operates within cofactor biosynthesis; tetrahydrofolate biosynthesis; 5,6,7,8-tetrahydrofolate from 7,8-dihydrofolate: step 1/1. Its function is as follows. Key enzyme in folate metabolism. Catalyzes an essential reaction for de novo glycine and purine synthesis, and for DNA precursor synthesis. In Mycobacterium tuberculosis (strain CDC 1551 / Oshkosh), this protein is Dihydrofolate reductase (folA).